The sequence spans 602 residues: Elongation factor 4 (602 aa).

A tr-type G domain is found at 8 to 190 (DLIRNFSIVA…AIVHRLPPPK (183 aa)). GTP-binding positions include 20 to 25 (DHGKST) and 137 to 140 (NKID).

Belongs to the TRAFAC class translation factor GTPase superfamily. Classic translation factor GTPase family. LepA subfamily.

The protein localises to the cell inner membrane. The enzyme catalyses GTP + H2O = GDP + phosphate + H(+). Its function is as follows. Required for accurate and efficient protein synthesis under certain stress conditions. May act as a fidelity factor of the translation reaction, by catalyzing a one-codon backward translocation of tRNAs on improperly translocated ribosomes. Back-translocation proceeds from a post-translocation (POST) complex to a pre-translocation (PRE) complex, thus giving elongation factor G a second chance to translocate the tRNAs correctly. Binds to ribosomes in a GTP-dependent manner. This chain is Elongation factor 4, found in Cereibacter sphaeroides (strain ATCC 17029 / ATH 2.4.9) (Rhodobacter sphaeroides).